Here is a 177-residue protein sequence, read N- to C-terminus: Large ribosomal subunit protein uL6 (177 aa).

It belongs to the universal ribosomal protein uL6 family. As to quaternary structure, part of the 50S ribosomal subunit.

In terms of biological role, this protein binds to the 23S rRNA, and is important in its secondary structure. It is located near the subunit interface in the base of the L7/L12 stalk, and near the tRNA binding site of the peptidyltransferase center. This is Large ribosomal subunit protein uL6 from Rickettsia prowazekii (strain Madrid E).